Reading from the N-terminus, the 156-residue chain is MSRKGHIKKRDVQPDPVYNSKLVTKIINIIMEDGKKGKAQTIFYQALKQVKTITNREPIKVFHEALNNIMPVLEVRTRRMGGQNYQVPSEVRPERRQSLGLRWIVKYTKESNEKTMEERLAKEIVDASLGNGVLVKKREETHRMAEANKAFAHYRW.

The protein belongs to the universal ribosomal protein uS7 family. As to quaternary structure, part of the 30S ribosomal subunit. Contacts proteins S9 and S11.

In terms of biological role, one of the primary rRNA binding proteins, it binds directly to 16S rRNA where it nucleates assembly of the head domain of the 30S subunit. Is located at the subunit interface close to the decoding center, probably blocks exit of the E-site tRNA. This is Small ribosomal subunit protein uS7 from Onion yellows phytoplasma (strain OY-M).